The sequence spans 208 residues: Cysteine-rich protein 2 (208 aa).

Residues 5 to 57 (CPKCDKTVYFAEKVSSLGKDWHKFCLKCERCNKTLTPGGHAEHDGKPFCHKPC) form the LIM zinc-binding 1 domain. An N6-acetyllysine modification is found at lysine 23. The residue at position 104 (serine 104) is a Phosphoserine. In terms of domain architecture, LIM zinc-binding 2 spans 126 to 178 (CPRCNKRVYFAEKVTSLGKDWHRPCLRCERCSKTLTPGGHAEHDGQPYCHKPC). Residues lysine 138 and lysine 144 each carry the N6-acetyllysine modification.

As to quaternary structure, interacts with TGFB1I1.

The protein is Cysteine-rich protein 2 (Crip2) of Mus musculus (Mouse).